We begin with the raw amino-acid sequence, 237 residues long: Ribonuclease PH (237 aa).

Residues arginine 86 and 124-126 (GTR) each bind phosphate.

It belongs to the RNase PH family. Homohexameric ring arranged as a trimer of dimers.

The catalysed reaction is tRNA(n+1) + phosphate = tRNA(n) + a ribonucleoside 5'-diphosphate. Phosphorolytic 3'-5' exoribonuclease that plays an important role in tRNA 3'-end maturation. Removes nucleotide residues following the 3'-CCA terminus of tRNAs; can also add nucleotides to the ends of RNA molecules by using nucleoside diphosphates as substrates, but this may not be physiologically important. Probably plays a role in initiation of 16S rRNA degradation (leading to ribosome degradation) during starvation. The sequence is that of Ribonuclease PH from Roseobacter denitrificans (strain ATCC 33942 / OCh 114) (Erythrobacter sp. (strain OCh 114)).